Here is a 157-residue protein sequence, read N- to C-terminus: SsrA-binding protein (157 aa).

The protein belongs to the SmpB family.

The protein resides in the cytoplasm. Required for rescue of stalled ribosomes mediated by trans-translation. Binds to transfer-messenger RNA (tmRNA), required for stable association of tmRNA with ribosomes. tmRNA and SmpB together mimic tRNA shape, replacing the anticodon stem-loop with SmpB. tmRNA is encoded by the ssrA gene; the 2 termini fold to resemble tRNA(Ala) and it encodes a 'tag peptide', a short internal open reading frame. During trans-translation Ala-aminoacylated tmRNA acts like a tRNA, entering the A-site of stalled ribosomes, displacing the stalled mRNA. The ribosome then switches to translate the ORF on the tmRNA; the nascent peptide is terminated with the 'tag peptide' encoded by the tmRNA and targeted for degradation. The ribosome is freed to recommence translation, which seems to be the essential function of trans-translation. This is SsrA-binding protein from Syntrophomonas wolfei subsp. wolfei (strain DSM 2245B / Goettingen).